The primary structure comprises 175 residues: Lipopolysaccharide export system protein LptH (175 aa).

The signal sequence occupies residues 1–24 (MRFVNTLPLIFGLTAALGSSMALA).

It belongs to the LptA family. In terms of assembly, component of the lipopolysaccharide transport and assembly complex. Mainly exists as a dimer in solution. Tends to oligomerize already in solution. The protomers follow one another in a head-to-tail fashion throughout the crystal lattice, yielding a continuous fiber arrangement.

The protein localises to the periplasm. Involved in the assembly of lipopolysaccharide (LPS). Required for the translocation of LPS from the inner membrane to the outer membrane. May form a bridge between the inner membrane and the outer membrane, via interactions with LptC and LptD, thereby facilitating LPS transfer across the periplasm. Binds LPS. Important for cell envelope stability and essential for growth, cell viability and ability to cause infection in different animal models. The polypeptide is Lipopolysaccharide export system protein LptH (Pseudomonas aeruginosa (strain ATCC 15692 / DSM 22644 / CIP 104116 / JCM 14847 / LMG 12228 / 1C / PRS 101 / PAO1)).